The sequence spans 987 residues: Kinesin-like protein KIN-14G (987 aa).

In terms of domain architecture, Calponin-homology (CH) spans 44-163 (SLRRYEAAGW…CILALKSYSE (120 aa)). Positions 201–221 (ISRTQSTDMLSTDQPLSSDGD) are disordered. In terms of domain architecture, Kinesin motor spans 394–721 (NIRVYCRVRP…LKFAERVGSV (328 aa)). 478–485 (GQTGSGKT) lines the ATP pocket. Residues 725-754 (AARVNKDNSEVKELKEQIANLKMALVRKGN) are a coiled coil. Disordered stretches follow at residues 759–849 (QPTA…ESKS) and 927–987 (NIQN…SLGT). The span at 788-797 (MGNTSNNSRP) shows a compositional bias: polar residues. Residues 840 to 849 (GKDEDRESKS) show a composition bias toward basic and acidic residues. Residues 964–974 (PPNTVNSQPQR) show a composition bias toward polar residues.

The protein belongs to the TRAFAC class myosin-kinesin ATPase superfamily. Kinesin family. KIN-14 subfamily. In terms of assembly, monomer. As to expression, flower specific.

It localises to the cytoplasm. Its subcellular location is the cytoskeleton. Microtubule-binding motor protein. This Arabidopsis thaliana (Mouse-ear cress) protein is Kinesin-like protein KIN-14G.